The primary structure comprises 64 residues: Large ribosomal subunit protein bL35 (64 aa).

It belongs to the bacterial ribosomal protein bL35 family.

In Acinetobacter baylyi (strain ATCC 33305 / BD413 / ADP1), this protein is Large ribosomal subunit protein bL35.